Here is a 278-residue protein sequence, read N- to C-terminus: Juvenile hormone acid O-methyltransferase (278 aa).

This sequence belongs to the methyltransferase superfamily. In terms of tissue distribution, specifically expressed in the corpora allata (CA).

It catalyses the reaction (2E,6E)-farnesoate + S-adenosyl-L-methionine = methyl (2E,6E)-farnesoate + S-adenosyl-L-homocysteine. The catalysed reaction is juvenile hormone III carboxylate + S-adenosyl-L-methionine = juvenile hormone III + S-adenosyl-L-homocysteine. Functionally, O-methyltransferase that transfers a methyl group from S-adenosyl-L-methionine (SAM) to the carboxyl group of juvenile hormone acids to produce active juvenile hormones in the corpora allata, the last step during juvenile hormone biosynthesis. Also able to methylate farnesoate to methyl farnesoate. The polypeptide is Juvenile hormone acid O-methyltransferase (Bombyx mori (Silk moth)).